A 337-amino-acid polypeptide reads, in one-letter code: Glyceraldehyde-3-phosphate dehydrogenase, cytosolic (337 aa).

Residues 1–151 are binding to NAD; that stretch reads MAKVKVGING…YKSDLNIVSN (151 aa). NAD(+) contacts are provided by residues 13-14, aspartate 35, and arginine 82; that span reads RI. Residues 152–337 are catalytic; that stretch reads ASCTTNCLAP…DLIMHISKCQ (186 aa). Residues 153–155, threonine 184, 213–214, and arginine 236 contribute to the D-glyceraldehyde 3-phosphate site; these read SCT and TG. The active-site Nucleophile is the cysteine 154. Residue asparagine 318 coordinates NAD(+).

The protein belongs to the glyceraldehyde-3-phosphate dehydrogenase family. Homotetramer.

It localises to the cytoplasm. It catalyses the reaction D-glyceraldehyde 3-phosphate + phosphate + NAD(+) = (2R)-3-phospho-glyceroyl phosphate + NADH + H(+). The protein operates within carbohydrate degradation; glycolysis; pyruvate from D-glyceraldehyde 3-phosphate: step 1/5. Key enzyme in glycolysis that catalyzes the first step of the pathway by converting D-glyceraldehyde 3-phosphate (G3P) into 3-phospho-D-glyceroyl phosphate. Essential for the maintenance of cellular ATP levels and carbohydrate metabolism. In Mesembryanthemum crystallinum (Common ice plant), this protein is Glyceraldehyde-3-phosphate dehydrogenase, cytosolic (GAPC).